Consider the following 138-residue polypeptide: Acid shock protein (138 aa).

A signal peptide spans 1–21 (MKKVLALIVAATMGLSSVAFA). Residues 22-85 (ADAVAPAAAA…TKKAPAQKAQ (64 aa)) constitute a propeptide that is removed on maturation. Residues 31-50 (APAATTTAAPAAAATKAPAK) show a composition bias toward low complexity. The disordered stretch occupies residues 31–138 (APAATTTAAP…ATKKAAPAAK (108 aa)). 2 stretches are compositionally biased toward basic residues: residues 51 to 77 (ATHHKKAHKKAPAQKAQAAKKHHKATK) and 122 to 131 (AAKKHHKATK).

Belongs to the Asr family. Post-translationally, proteolytic processing gives rise to the active protein.

Its subcellular location is the periplasm. Required for growth and/or survival at acidic conditions. This Serratia proteamaculans (strain 568) protein is Acid shock protein.